Reading from the N-terminus, the 1179-residue chain is Protein turtle homolog A (1179 aa).

Positions 1–20 are cleaved as a signal peptide; that stretch reads MVWCLGLAVLSLVISQGADG. At 21–734 the chain is on the extracellular side; it reads RGKPEVVSVV…TQLPGLLPQP (714 aa). 5 Ig-like domains span residues 24–124, 136–216, 226–318, 322–410, and 418–502; these read PEVV…DFAN, PQFQ…GSAT, PPVI…AYLT, PAQV…SPVT, and PAFI…TNVY. Disulfide bonds link Cys-41–Cys-108, Cys-158–Cys-206, Cys-248–Cys-301, Cys-344–Cys-395, and Cys-440–Cys-486. Residues Asn-188 and Asn-256 are each glycosylated (N-linked (GlcNAc...) asparagine). 2 consecutive Fibronectin type-III domains span residues 507–611 and 623–718; these read SPHV…TTPA and PLSP…TSGL. Asn-513 and Asn-524 each carry an N-linked (GlcNAc...) asparagine glycan. The tract at residues 606–626 is disordered; that stretch reads LPTTPAAPGLPPTEIPPPLSP. Positions 613–626 are enriched in pro residues; it reads PGLPPTEIPPPLSP. A helical transmembrane segment spans residues 735 to 755; it reads VLAGVVGGVCFLGVAVLVSIL. At 756–1179 the chain is on the cytoplasmic side; it reads AGCLLNRRRA…VPHPEQATLL (424 aa). Disordered stretches follow at residues 767–919, 940–988, and 1015–1079; these read RRRR…PLPG, DWPP…VVGA, and AAPR…KRRN. Over residues 785 to 800 the composition is skewed to low complexity; sequence GKSAAPSALGSGSPDS. Ser-809 carries the post-translational modification Phosphoserine. 2 stretches are compositionally biased toward pro residues: residues 826 to 836 and 906 to 919; these read TPSPHPDPPSS and VAPP…PLPG. Residue Thr-972 is modified to Phosphothreonine. The PDZ-binding signature appears at 1177 to 1179; the sequence is TLL.

The protein belongs to the immunoglobulin superfamily. Turtle family. Interacts with MAGI2 and SHANK1.

The protein resides in the cell membrane. It localises to the synapse. Its function is as follows. Functions in dendrite outgrowth and synapse maturation. This chain is Protein turtle homolog A (IGSF9), found in Homo sapiens (Human).